The chain runs to 377 residues: Chaperone protein DnaJ (377 aa).

The J domain maps to 5–70 (DFYETLGVSK…QKRAAYDRFG (66 aa)). The CR-type zinc finger occupies 138–216 (GKTAQIRVPT…CHGQGRVTEE (79 aa)). Zn(2+) is bound by residues cysteine 151, cysteine 154, cysteine 168, cysteine 171, cysteine 190, cysteine 193, cysteine 204, and cysteine 207. CXXCXGXG motif repeat units lie at residues 151-158 (CDVCSGSG), 168-175 (CATCQGSG), 190-197 (CPTCHGRG), and 204-211 (CGKCHGQG).

The protein belongs to the DnaJ family. As to quaternary structure, homodimer. Zn(2+) is required as a cofactor.

Its subcellular location is the cytoplasm. Functionally, participates actively in the response to hyperosmotic and heat shock by preventing the aggregation of stress-denatured proteins and by disaggregating proteins, also in an autonomous, DnaK-independent fashion. Unfolded proteins bind initially to DnaJ; upon interaction with the DnaJ-bound protein, DnaK hydrolyzes its bound ATP, resulting in the formation of a stable complex. GrpE releases ADP from DnaK; ATP binding to DnaK triggers the release of the substrate protein, thus completing the reaction cycle. Several rounds of ATP-dependent interactions between DnaJ, DnaK and GrpE are required for fully efficient folding. Also involved, together with DnaK and GrpE, in the DNA replication of plasmids through activation of initiation proteins. This is Chaperone protein DnaJ from Agrobacterium fabrum (strain C58 / ATCC 33970) (Agrobacterium tumefaciens (strain C58)).